The primary structure comprises 509 residues: Ethanolamine-phosphate phospho-lyase (509 aa).

Lys-279 bears the N6-(pyridoxal phosphate)lysine mark. The segment covering 451–474 (EKTSAKRKVHNENSGDTNAKEKET) has biased composition (basic and acidic residues). The tract at residues 451–509 (EKTSAKRKVHNENSGDTNAKEKETCSSNSQERNPNDHAYRQSNGLHPESPTFTRKRIRT) is disordered.

It belongs to the class-III pyridoxal-phosphate-dependent aminotransferase family. In terms of assembly, homotetramer. Pyridoxal 5'-phosphate is required as a cofactor.

Its subcellular location is the mitochondrion. It catalyses the reaction phosphoethanolamine + H2O = acetaldehyde + NH4(+) + phosphate. In terms of biological role, catalyzes the pyridoxal-phosphate-dependent breakdown of phosphoethanolamine, converting it to ammonia, inorganic phosphate and acetaldehyde. This Xenopus laevis (African clawed frog) protein is Ethanolamine-phosphate phospho-lyase (etnppl).